A 180-amino-acid chain; its full sequence is uncharacterized protein (180 aa).

6 helical membrane passes run 4–24 (KSNIKLILATDLLAVLILSLF), 25–45 (IKNFKMVLAFLLAVFVIWLFI), 57–77 (NLLAMSVGFIEGILIFLGIIY), 81–101 (FLDITLGIFAILILIVMGILF), 124–144 (FLTLISIFGMLLTIYVFLLIL), and 156–176 (IIRTIMLVITANMFIIEFYTF).

It is found in the cell membrane. This is an uncharacterized protein from Methanocaldococcus jannaschii (strain ATCC 43067 / DSM 2661 / JAL-1 / JCM 10045 / NBRC 100440) (Methanococcus jannaschii).